We begin with the raw amino-acid sequence, 393 residues long: 4-hydroxyphenylpyruvate dioxygenase (393 aa).

Residue threonine 2 is modified to N-acetylthreonine. VOC domains follow at residues 18-149 and 180-338; these read HFHS…LVEK and IIDH…IFTK. The residue at position 132 (lysine 132) is an N6-succinyllysine. Fe cation is bound at residue histidine 183. A phosphoserine mark is found at serine 211, serine 226, and serine 250. 2 residues coordinate Fe cation: histidine 266 and glutamate 349.

Belongs to the 4HPPD family. As to quaternary structure, homodimer. Fe cation is required as a cofactor.

Its subcellular location is the cytoplasm. The protein resides in the endoplasmic reticulum membrane. It is found in the golgi apparatus membrane. The enzyme catalyses 3-(4-hydroxyphenyl)pyruvate + O2 = homogentisate + CO2. Its pathway is amino-acid degradation; L-phenylalanine degradation; acetoacetate and fumarate from L-phenylalanine: step 3/6. Functionally, catalyzes the conversion of 4-hydroxyphenylpyruvic acid to homogentisic acid, one of the steps in tyrosine catabolism. This chain is 4-hydroxyphenylpyruvate dioxygenase (HPD), found in Bos taurus (Bovine).